The chain runs to 176 residues: Cell division protein ZapC (176 aa).

It belongs to the ZapC family. Interacts directly with FtsZ.

It is found in the cytoplasm. Contributes to the efficiency of the cell division process by stabilizing the polymeric form of the cell division protein FtsZ. Acts by promoting interactions between FtsZ protofilaments and suppressing the GTPase activity of FtsZ. In Pseudoalteromonas translucida (strain TAC 125), this protein is Cell division protein ZapC.